A 158-amino-acid chain; its full sequence is MRKAKPKKRQILPDPVYGDVRVTKFVNHLMYDGKKNTAFSIFYGALDIVKTKLSNEEKSALEIWKAALDNITPQVEVKSRRIGGATFQVPTEIRPERKESISMKNLILYARKRGGKTMADKLAAEIVDAFNNQGAAFKRKEDMHRMAEANRAFAHFRF.

Belongs to the universal ribosomal protein uS7 family. In terms of assembly, part of the 30S ribosomal subunit. Contacts proteins S9 and S11.

Its function is as follows. One of the primary rRNA binding proteins, it binds directly to 16S rRNA where it nucleates assembly of the head domain of the 30S subunit. Is located at the subunit interface close to the decoding center, probably blocks exit of the E-site tRNA. The polypeptide is Small ribosomal subunit protein uS7 (Porphyromonas gingivalis (strain ATCC 33277 / DSM 20709 / CIP 103683 / JCM 12257 / NCTC 11834 / 2561)).